Consider the following 452-residue polypeptide: MKELKYDVLIIGGGFAGSSAAYQLSRRGLKILLVDSKPWNRIGDKPCGDAVSKAHFDKLGMPYPKGEELENKINGIKLYSPDMQTVWTVNGEGFELNAPLYNQRVLKEAQDRGVEIWDLTTAMKPIFEDGYVKGAVLFNRRTNEELTVYSKVVVEATGYSRSFRSKLPPELPITEDLDDKDADVAYREVLLTKEDIEDHDYLRIFIDQETSPGGYWWYFPKGKNKVNVGLGIQGGMGYPSIHEYYKKYLDKYAPDVDKSKLLVKGGALVPTRRPLYTMAWNGIIVIGDSGFTVNPVHGGGKGSAMISGYCAAKAILSAFETGDFSASGLWDMNICYVNEYGAKQASLDIFRRFLQKLSNDDINYGMKKKIIKEEDLLEASEKGDLHLSVADKAMRVISGLGRPSLLFKLKAVAESMKKIKELYLNYPRSPSSLGSWRREVDNVLTEFNKSLS.

FAD contacts are provided by residues 15–16 (FA), 35–36 (DS), and 45–50 (KPCGDA). Position 55 (His55) interacts with a 2,3-bis-O-phytanyl-sn-glycerol 1-phospholipid. Residues Ala122 and Asp288 each coordinate FAD. His297 serves as a coordination point for a 2,3-bis-O-phytanyl-sn-glycerol 1-phospholipid. FAD is bound at residue 300 to 301 (GK). A disulfide bond links Cys310 and Cys335. Tyr340 provides a ligand contact to a 2,3-bis-O-phytanyl-sn-glycerol 1-phospholipid.

It belongs to the geranylgeranyl reductase family. Monomer. FAD is required as a cofactor.

The catalysed reaction is a 2,3-bis-O-phytanyl-sn-glycerol 1-phospholipid + 8 A = a 2,3-bis-O-(geranylgeranyl)-sn-glycerol 1-phospholipid + 8 AH2. The enzyme catalyses 2,3-bis-O-(phytanyl)-sn-glycerol 1-phosphate + 8 A = 2,3-bis-O-(geranylgeranyl)-sn-glycerol 1-phosphate + 8 AH2. It carries out the reaction sn-3-O-phytanylglycerol 1-phosphate + 4 A = sn-3-O-(geranylgeranyl)glycerol 1-phosphate + 4 AH2. It catalyses the reaction phytyl diphosphate + 3 A = (2E,6E,10E)-geranylgeranyl diphosphate + 3 AH2. It participates in membrane lipid metabolism; glycerophospholipid metabolism. Its function is as follows. Is involved in the reduction of 2,3-digeranylgeranylglycerophospholipids (unsaturated archaeols) into 2,3-diphytanylglycerophospholipids (saturated archaeols) in the biosynthesis of archaeal membrane lipids. Catalyzes the formation of archaetidic acid (2,3-di-O-phytanyl-sn-glyceryl phosphate) from 2,3-di-O-geranylgeranylglyceryl phosphate (DGGGP) via the hydrogenation of each double bond of the isoprenoid chains. Is not active with NADPH or NADH as an electron donor; the physiological reducing agent is unknown. Is also active on the more upstream precursors of membrane lipid biosynthesis, catalyzing the complete reduction of 3-O-geranylgeranylglyceryl phosphate (GGGP) to 3-O-phytanylglyceryl phosphate, and the partial reduction of geranylgeranyl diphosphate (GGPP) to phytyl diphosphate, thus reducing three of four GGPP double bonds and preserving the allylic double bond (at position 2). This reaction product is a reactive prenyl donor, which can be used as a substrate by archaeal prenyltransferases such as GGGP synthases. The sequence is that of Digeranylgeranylglycerophospholipid reductase from Sulfolobus acidocaldarius (strain ATCC 33909 / DSM 639 / JCM 8929 / NBRC 15157 / NCIMB 11770).